The sequence spans 469 residues: Putative dipeptidase SE_1424 (469 aa).

His-84 is a binding site for Zn(2+). Asp-86 is an active-site residue. Zn(2+) is bound at residue Asp-115. Catalysis depends on Glu-149, which acts as the Proton acceptor. Zn(2+)-binding residues include Glu-150, Asp-173, and His-440.

The protein belongs to the peptidase M20A family. The cofactor is Zn(2+).

The polypeptide is Putative dipeptidase SE_1424 (Staphylococcus epidermidis (strain ATCC 12228 / FDA PCI 1200)).